The primary structure comprises 453 residues: Pup--protein ligase (453 aa).

Glu-9 provides a ligand contact to Mg(2+). ATP is bound at residue Arg-53. Mg(2+) is bound at residue Tyr-55. The active-site Proton acceptor is the Asp-57. A Mg(2+)-binding site is contributed by Glu-63. 2 residues coordinate ATP: Thr-66 and Trp-420.

It belongs to the Pup ligase/Pup deamidase family. Pup-conjugating enzyme subfamily.

It catalyses the reaction ATP + [prokaryotic ubiquitin-like protein]-L-glutamate + [protein]-L-lysine = ADP + phosphate + N(6)-([prokaryotic ubiquitin-like protein]-gamma-L-glutamyl)-[protein]-L-lysine.. The protein operates within protein degradation; proteasomal Pup-dependent pathway. It participates in protein modification; protein pupylation. Catalyzes the covalent attachment of the prokaryotic ubiquitin-like protein modifier Pup to the proteasomal substrate proteins, thereby targeting them for proteasomal degradation. This tagging system is termed pupylation. The ligation reaction involves the side-chain carboxylate of the C-terminal glutamate of Pup and the side-chain amino group of a substrate lysine. This chain is Pup--protein ligase, found in Streptomyces coelicolor (strain ATCC BAA-471 / A3(2) / M145).